Here is a 440-residue protein sequence, read N- to C-terminus: ATP-dependent protease ATPase subunit HslU (440 aa).

Residues V18, 60–65 (GVGKTE), D253, E318, and R390 each bind ATP.

The protein belongs to the ClpX chaperone family. HslU subfamily. As to quaternary structure, a double ring-shaped homohexamer of HslV is capped on each side by a ring-shaped HslU homohexamer. The assembly of the HslU/HslV complex is dependent on binding of ATP.

Its subcellular location is the cytoplasm. ATPase subunit of a proteasome-like degradation complex; this subunit has chaperone activity. The binding of ATP and its subsequent hydrolysis by HslU are essential for unfolding of protein substrates subsequently hydrolyzed by HslV. HslU recognizes the N-terminal part of its protein substrates and unfolds these before they are guided to HslV for hydrolysis. The chain is ATP-dependent protease ATPase subunit HslU from Methylococcus capsulatus (strain ATCC 33009 / NCIMB 11132 / Bath).